A 197-amino-acid polypeptide reads, in one-letter code: dITP/XTP pyrophosphatase (197 aa).

Position 8-13 (8-13 (TGNQGK)) interacts with substrate. Asp69 (proton acceptor) is an active-site residue. Mg(2+) is bound at residue Asp69. Residues Ser70, 154 to 157 (FGYD), Lys177, and 182 to 183 (HR) contribute to the substrate site.

This sequence belongs to the HAM1 NTPase family. As to quaternary structure, homodimer. It depends on Mg(2+) as a cofactor.

The enzyme catalyses XTP + H2O = XMP + diphosphate + H(+). It carries out the reaction dITP + H2O = dIMP + diphosphate + H(+). The catalysed reaction is ITP + H2O = IMP + diphosphate + H(+). Functionally, pyrophosphatase that catalyzes the hydrolysis of nucleoside triphosphates to their monophosphate derivatives, with a high preference for the non-canonical purine nucleotides XTP (xanthosine triphosphate), dITP (deoxyinosine triphosphate) and ITP. Seems to function as a house-cleaning enzyme that removes non-canonical purine nucleotides from the nucleotide pool, thus preventing their incorporation into DNA/RNA and avoiding chromosomal lesions. The polypeptide is dITP/XTP pyrophosphatase (Photobacterium profundum (strain SS9)).